Consider the following 651-residue polypeptide: Protein cueball (651 aa).

Positions 1–21 are cleaved as a signal peptide; that stretch reads MILRLFILLSIITVYLQLSVG. The Extracellular portion of the chain corresponds to 22–540; that stretch reads IQQQFEFAIT…VCLAPNAWTG (519 aa). N-linked (GlcNAc...) asparagine glycans are attached at residues asparagine 77, asparagine 102, and asparagine 114. LDL-receptor class B repeat units follow at residues 115 to 162, 163 to 207, and 208 to 253; these read RTIY…DICG, RKLY…DQGA, and KRIF…TRNA. A glycan (N-linked (GlcNAc...) asparagine) is linked at asparagine 183. A disordered region spans residues 290–311; sequence VEGEEGTGAMDDNDIWPVGDFE. An N-linked (GlcNAc...) asparagine glycan is attached at asparagine 324. EGF-like domains follow at residues 374–408, 409–440, and 443–480; these read QLDE…TRCE, TNEC…YSGE, and EVKK…LRCE. Disulfide bonds link cysteine 383–cysteine 396, cysteine 398–cysteine 407, cysteine 412–cysteine 421, cysteine 416–cysteine 431, cysteine 447–cysteine 457, cysteine 451–cysteine 468, and cysteine 470–cysteine 479. N-linked (GlcNAc...) asparagine glycans are attached at residues asparagine 482 and asparagine 499. Residues 541-561 traverse the membrane as a helical segment; it reads SVLMPLMISLILILLLLTIFI. Residues 562-651 are Cytoplasmic-facing; that stretch reads HGLRRLYKPK…LIHNMEDDLY (90 aa).

It belongs to the cueball family.

The protein resides in the cell membrane. In terms of biological role, has a role in spermatogenesis and oogenesis. In Drosophila willistoni (Fruit fly), this protein is Protein cueball.